The following is a 328-amino-acid chain: Alpha-tubulin N-acetyltransferase 2 (328 aa).

In terms of domain architecture, N-acetyltransferase spans 5–185; the sequence is SQVALLPKLS…NNFVVFHRYF (181 aa). Residues 119 to 132 and 155 to 164 contribute to the acetyl-CoA site; these read FFVDTSFQRKGFGK and SVKFLAFLRK. Disordered stretches follow at residues 219–261 and 282–328; these read EYQS…PGKK and GGDP…TPEH. Over residues 238–248 the composition is skewed to pro residues; it reads TPPPPLPPPLV. A compositionally biased stretch (polar residues) spans 312–328; the sequence is PTRSGVQYNIISGTPEH.

Belongs to the acetyltransferase ATAT1 family.

It carries out the reaction L-lysyl-[alpha-tubulin] + acetyl-CoA = N(6)-acetyl-L-lysyl-[alpha-tubulin] + CoA + H(+). Functionally, specifically acetylates 'Lys-40' in alpha-tubulin on the lumenal side of microtubules. Promotes microtubule destabilization and accelerates microtubule dynamics; this activity may be independent of acetylation activity. Acetylates alpha-tubulin with a slow enzymatic rate, due to a catalytic site that is not optimized for acetyl transfer. Enters the microtubule through each end and diffuses quickly throughout the lumen of microtubules. Acetylates only long/old microtubules because of its slow acetylation rate since it does not have time to act on dynamically unstable microtubules before the enzyme is released. The polypeptide is Alpha-tubulin N-acetyltransferase 2 (Trypanosoma cruzi (strain CL Brener)).